The following is a 413-amino-acid chain: Cardiolipin synthase B (413 aa).

2 consecutive PLD phosphodiesterase domains span residues 108–135 (VFRR…SAEH) and 285–312 (RRRP…DPLS). Residues His113, Lys115, Asp120, His290, Lys292, and Asp297 contribute to the active site. A disordered region spans residues 390–413 (VGPPAQPTMETQDRVETENTGVKP).

It belongs to the phospholipase D family. Cardiolipin synthase subfamily. ClsB sub-subfamily.

Its subcellular location is the cell membrane. It catalyses the reaction 2 a 1,2-diacyl-sn-glycero-3-phospho-(1'-sn-glycerol) = a cardiolipin + glycerol. Its function is as follows. Catalyzes the phosphatidyl group transfer from one phosphatidylglycerol molecule to another to form cardiolipin (CL) (diphosphatidylglycerol) and glycerol. The sequence is that of Cardiolipin synthase B from Escherichia coli O6:H1 (strain CFT073 / ATCC 700928 / UPEC).